The chain runs to 624 residues: Chaperone protein HtpG (624 aa).

The a; substrate-binding stretch occupies residues 1–336 (MKGQETRGFQ…SNDLPLNVSR (336 aa)). The tract at residues 337–552 (EILQDSTVTR…ADEMSTQMAK (216 aa)) is b. The interval 553 to 624 (LFAAAGQSVP…IRRMNQLLVS (72 aa)) is c.

The protein belongs to the heat shock protein 90 family. Homodimer.

It is found in the cytoplasm. Its function is as follows. Molecular chaperone. Has ATPase activity. The protein is Chaperone protein HtpG of Salmonella typhi.